Here is a 172-residue protein sequence, read N- to C-terminus: RNA silencing suppressor p19 (172 aa).

Positions 1 to 15 (MERAIQGNDAREQAY) are enriched in basic and acidic residues. The disordered stretch occupies residues 1–38 (MERAIQGNDAREQAYGERWNGGPGGSTSPFQLPDESPS).

This sequence belongs to the tombusvirus protein p19 family. In terms of assembly, homodimer.

Its function is as follows. Viral suppressor of RNA silencing which binds specifically to silencing RNAs (siRNAs). Acts as a molecular caliper to specifically select siRNAs based on the length of the duplex region of the RNA. The protein is RNA silencing suppressor p19 of Tomato bushy stunt virus (strain A23) (TBSV).